Reading from the N-terminus, the 252-residue chain is Neurotrophic factor BDNF precursor form (252 aa).

A signal peptide spans methionine 1 to alanine 18. The propeptide occupies alanine 19–arginine 133. Residues leucine 43–serine 62 form a disordered region. Asparagine 126 carries N-linked (GlcNAc...) asparagine glycosylation. Cystine bridges form between cysteine 146/cysteine 213, cysteine 191/cysteine 242, and cysteine 201/cysteine 244.

This sequence belongs to the NGF-beta family. In terms of assembly, monomers and homodimers. Binds to NTRK2/TRKB. Can form heterodimers with other neurotrophin family members, such as NTF3 and NTF4 (in vitro), but the physiological relevance of this is not clear. BDNF precursor form: interacts with the heterodimer formed by NGFR and SORCS2. Mature BDNF has much lower affinity for the heterodimer formed by NGFR and SORCS2. Post-translationally, N-glycosylated and glycosulfated, contrary to mature BDNF. Mature BDNF is produced by proteolytic removal of the propeptide, catalyzed by a FURIN family member. In addition, the precursor form is proteolytically cleaved within the propeptide, but this is not an obligatory intermediate for the production of mature BDNF. Can be converted into mature BDNF by plasmin (PLG). Brain and central nervous system.

It is found in the secreted. Its function is as follows. Important signaling molecule that activates signaling cascades downstream of NTRK2. During development, promotes the survival and differentiation of selected neuronal populations of the peripheral and central nervous systems. Participates in axonal growth, pathfinding and in the modulation of dendritic growth and morphology. Major regulator of synaptic transmission and plasticity at adult synapses in many regions of the CNS. The versatility of BDNF is emphasized by its contribution to a range of adaptive neuronal responses including long-term potentiation (LTP), long-term depression (LTD), certain forms of short-term synaptic plasticity, as well as homeostatic regulation of intrinsic neuronal excitability. Important signaling molecule that activates signaling cascades downstream of NTRK2. Activates signaling cascades via the heterodimeric receptor formed by NGFR and SORCS2. Signaling via NGFR and SORCS2 plays a role in synaptic plasticity and long-term depression (LTD). Binding to NGFR and SORCS2 promotes neuronal apoptosis. Promotes neuronal growth cone collapse. The protein is Neurotrophic factor BDNF precursor form (BDNF) of Sus scrofa (Pig).